The following is a 341-amino-acid chain: Aspartate--ammonia ligase (341 aa).

Belongs to the class-II aminoacyl-tRNA synthetase family. AsnA subfamily.

Its subcellular location is the cytoplasm. It carries out the reaction L-aspartate + NH4(+) + ATP = L-asparagine + AMP + diphosphate + H(+). Its pathway is amino-acid biosynthesis; L-asparagine biosynthesis; L-asparagine from L-aspartate (ammonia route): step 1/1. This Clostridium tetani (strain Massachusetts / E88) protein is Aspartate--ammonia ligase.